The primary structure comprises 118 residues: Late cornified envelope protein 1C (118 aa).

The span at 1 to 10 (MSCQQSQQQC) shows a compositional bias: low complexity. 2 disordered regions span residues 1–23 (MSCQQSQQQCQPPPKCTPKCPPK) and 87–118 (CHRPQSSGCCSQPSGGSSCCGGGSGQHSGGCC). Positions 11–23 (QPPPKCTPKCPPK) are enriched in pro residues. Residues 90–103 (PQSSGCCSQPSGGS) are compositionally biased toward low complexity. Gly residues predominate over residues 104–118 (SCCGGGSGQHSGGCC).

This sequence belongs to the LCE family. In terms of assembly, interacts with CYSRT1. In terms of tissue distribution, skin-specific. Expression was readily detected in adult trunk skin, adult arm skin, fetal skin, penal skin, vulva, esophagus and tongue. Not expressed in the cervix, rectum, lung, colon, or placenta.

Its function is as follows. Precursors of the cornified envelope of the stratum corneum. The sequence is that of Late cornified envelope protein 1C (LCE1C) from Homo sapiens (Human).